A 535-amino-acid chain; its full sequence is Methylmalonate-semialdehyde/malonate-semialdehyde dehydrogenase [acylating], mitochondrial (535 aa).

The N-terminal 32 residues, M1 to F32, are a transit peptide targeting the mitochondrion. 4 positions are modified to N6-acetyllysine; alternate: K47, K52, K55, and K76. An N6-succinyllysine; alternate mark is found at K47, K52, K55, and K76. K87 is subject to N6-acetyllysine. 2 positions are modified to N6-acetyllysine; alternate: K117 and K129. Residues K117 and K129 each carry the N6-succinyllysine; alternate modification. 6 residues coordinate NAD(+): A183, F185, K209, E212, R213, and S262. S262 is subject to Phosphoserine. K298 bears the N6-acetyllysine mark. The Nucleophile role is filled by C317. K330 and K331 each carry N6-acetyllysine. N6-acetyllysine; alternate is present on residues K364 and K376. 2 positions are modified to N6-succinyllysine; alternate: K364 and K376. Position 380 is a phosphoserine (S380). K391 is subject to N6-succinyllysine. NAD(+) is bound at residue E417. K500 carries the post-translational modification N6-acetyllysine. Position 517 is an N6-succinyllysine (K517).

Belongs to the aldehyde dehydrogenase family. Homotetramer. Post-translationally, acetylation of Lys-55; Lys-117 and Lys-331 is observed in liver mitochondria from fasted mice but not from fed mice.

The protein localises to the mitochondrion. The catalysed reaction is 3-oxopropanoate + NAD(+) + CoA + H2O = hydrogencarbonate + acetyl-CoA + NADH + H(+). The enzyme catalyses 2-methyl-3-oxopropanoate + NAD(+) + CoA + H2O = propanoyl-CoA + hydrogencarbonate + NADH + H(+). It carries out the reaction (R)-2-methyl-3-oxopropanoate + NAD(+) + CoA + H2O = propanoyl-CoA + hydrogencarbonate + NADH + H(+). It catalyses the reaction (S)-2-methyl-3-oxopropanoate + NAD(+) + CoA + H2O = propanoyl-CoA + hydrogencarbonate + NADH + H(+). Its function is as follows. Malonate and methylmalonate semialdehyde dehydrogenase involved in the catabolism of valine, thymine, and compounds catabolized by way of beta-alanine, including uracil and cytidine. This Mus musculus (Mouse) protein is Methylmalonate-semialdehyde/malonate-semialdehyde dehydrogenase [acylating], mitochondrial.